A 212-amino-acid polypeptide reads, in one-letter code: Transmembrane protein 65 (212 aa).

Residues methionine 1–tyrosine 88 lie on the Cytoplasmic side of the membrane. Residues isoleucine 89–isoleucine 109 form a helical membrane-spanning segment. At alanine 110–glutamate 116 the chain is on the extracellular side. Residues leucine 117–valine 137 traverse the membrane as a helical segment. Residues serine 138–aspartate 139 lie on the Cytoplasmic side of the membrane. A helical transmembrane segment spans residues leucine 140–isoleucine 160. Residues proline 161–histidine 178 are Extracellular-facing. Residues methionine 179–leucine 199 traverse the membrane as a helical segment. At serine 200–asparagine 212 the chain is on the cytoplasmic side.

As to quaternary structure, monomer. Homodimer. Interacts with GJA1. Expression is restricted to the heart (at protein level).

The protein localises to the cell membrane. It localises to the mitochondrion inner membrane. Functionally, essential for maintaining proper cardiac intercalated disk (ICD) structure and function. May regulate cardiac conduction and the function of the gap junction protein GJA1. May contribute to the stability and proper localization of GJA1 to cardiac intercalated disk thereby regulating gap junction communication. Regulates mitochondrial respiration and mitochondrial DNA copy number maintenance. In Danio rerio (Zebrafish), this protein is Transmembrane protein 65 (tmem65).